Consider the following 149-residue polypeptide: Large ribosomal subunit protein bL9 (149 aa).

This sequence belongs to the bacterial ribosomal protein bL9 family.

Functionally, binds to the 23S rRNA. The polypeptide is Large ribosomal subunit protein bL9 (Christiangramia forsetii (strain DSM 17595 / CGMCC 1.15422 / KT0803) (Gramella forsetii)).